Consider the following 766-residue polypeptide: FYVE, RhoGEF and PH domain-containing protein 4 (766 aa).

Disordered stretches follow at residues 1–20 (MEEI…PSKV), 46–83 (NLNA…DKTQ), and 134–188 (ETAT…ESPL). The segment at 1–150 (MEEIKPASAS…SPTTDSCDGN (150 aa)) is actin filament-binding. 2 stretches are compositionally biased toward polar residues: residues 58–83 (LTTT…DKTQ) and 145–157 (DSCD…SSYR). Residues 167 to 184 (LEERGAETETKVQERENG) are compositionally biased toward basic and acidic residues. The DH domain occupies 206-393 (KLHKIANELL…STAASHSNSA (188 aa)). In terms of domain architecture, PH 1 spans 422–521 (ELIKEGQILK…WIKALQETID (100 aa)). Residues 559 to 619 (DNEVTMCMKC…VCKDCYQIIS (61 aa)) form an FYVE-type zinc finger. 8 residues coordinate Zn(2+): Cys-565, Cys-568, Cys-582, Cys-585, Cys-590, Cys-593, Cys-611, and Cys-614. The 98-residue stretch at 643–740 (NSVVCSFLQY…WLKVILLAVT (98 aa)) folds into the PH 2 domain. Phosphoserine occurs at positions 702 and 716. Positions 742–766 (ETPGGPNEHPATLDDHPEPKKKSEC) are disordered. A compositionally biased stretch (basic and acidic residues) spans 752-766 (ATLDDHPEPKKKSEC).

In terms of assembly, homooligomer. As to expression, expressed in different tissues, including brain, cerebellum, peripheral nerve, skeletal muscle, heart, uterus, placenta and testis.

The protein localises to the cytoplasm. It localises to the cytoskeleton. The protein resides in the cell projection. It is found in the filopodium. Its function is as follows. Activates CDC42, a member of the Ras-like family of Rho- and Rac proteins, by exchanging bound GDP for free GTP. Plays a role in regulating the actin cytoskeleton and cell shape. Activates MAPK8. The protein is FYVE, RhoGEF and PH domain-containing protein 4 (FGD4) of Homo sapiens (Human).